A 315-amino-acid chain; its full sequence is PIH1 domain-containing protein 2 (315 aa).

This sequence belongs to the PIH1 family.

The polypeptide is PIH1 domain-containing protein 2 (PIH1D2) (Bos taurus (Bovine)).